The sequence spans 274 residues: F-box protein SKIP5 (274 aa).

In terms of domain architecture, F-box spans 32–79 (LTSLNNLDDGCLMHILSFLSPIPDRYNTALVCHRWRYLACHPRLWLRV).

As to quaternary structure, part of a SCF (SKP1-cullin-F-box) protein ligase complex. Interacts with SKP1A/ASK1.

The protein operates within protein modification; protein ubiquitination. The sequence is that of F-box protein SKIP5 (SKIP5) from Arabidopsis thaliana (Mouse-ear cress).